Reading from the N-terminus, the 251-residue chain is UDP-N-acetylglucosamine--dolichyl-phosphate N-acetylglucosaminyltransferase (251 aa).

A helical membrane pass occupies residues 150–167; that stretch reads VGNLGLSFITFLLGGYYV.

It belongs to the glycosyltransferase 2 family.

It localises to the cell membrane. It catalyses the reaction a di-trans,poly-cis-dolichyl phosphate + UDP-N-acetyl-alpha-D-glucosamine = an N-acetyl-alpha-D-glucosaminyl-phospho-di-trans,poly-cis-dolichol + UDP. It participates in cell surface structure biogenesis; S-layer biogenesis. The protein operates within protein modification; protein glycosylation. Its function is as follows. Involved in the assembly of an N-linked disaccharide that decorates the S-layer glycoprotein and flagellins. AglK initiates N-linked glycosylation through the formation of alpha-linked dolichyl monophosphate N-acetylglucosamine. It catalyzes the transfer of GlcNAc from the donor substrate UDP-GlcNAc to dolichyl phosphate C55 (Dol-P) to yield Dol-P-GlcNAc. AglK reaction proceeds with retention of stereochemistry. The reaction is specific for UDP-GlcNAc. AglK shows a stronger preference for short dolichol (C55-60 Dol-P) substrates compared with the longer (C85-105 Dol-P). This chain is UDP-N-acetylglucosamine--dolichyl-phosphate N-acetylglucosaminyltransferase, found in Methanococcus voltae.